Reading from the N-terminus, the 1094-residue chain is Probable arabinosyltransferase C (1094 aa).

The next 13 helical transmembrane spans lie at 28-50, 232-251, 264-286, 341-360, 373-392, 431-453, 466-488, 530-552, 565-582, 586-608, 620-642, 657-679, and 700-722; these read IARY…TPLL, AAMI…LHIL, PARW…WWHF, SIWM…WVIS, TSRA…WLPL, IGAL…LVAI, RFGV…IPIF, SIAR…AMSL, SRRI…MMFT, WTHH…AVAV, TVFA…GWWY, WRWS…AAWF, and LAGI…EVVS. Low complexity predominate over residues 817-831; sequence GSEPGTEGGTTAAPG. The tract at residues 817–836 is disordered; it reads GSEPGTEGGTTAAPGINGSR.

Belongs to the emb family.

The protein resides in the cell membrane. Its function is as follows. Arabinosyl transferase responsible for the polymerization of arabinose into the arabinan of arabinogalactan. This Mycobacterium tuberculosis (strain ATCC 25618 / H37Rv) protein is Probable arabinosyltransferase C (embC).